We begin with the raw amino-acid sequence, 460 residues long: Proton extrusion protein PxcA (460 aa).

2 disordered regions span residues 82-128 (FSRL…QRRD) and 143-190 (SRYK…GSGN). The span at 90–102 (QNGSGPTSAQDKA) shows a compositional bias: polar residues. A compositionally biased stretch (low complexity) spans 107-120 (AAEANVSESSSENS). Positions 151–163 (KSQPISASISTSP) are enriched in polar residues. Low complexity predominate over residues 171 to 184 (QPTSTQPSSSNVSV). 4 helical membrane passes run 242-262 (FLLL…NFLF), 337-357 (GLKN…LIFV), 373-393 (IYGL…DVFV), and 420-440 (FIYG…KYWI).

The protein belongs to the CemA family.

It is found in the cell inner membrane. Functionally, required for H(+) efflux immediately after light irradiation to form a rapid H(+) concentration gradient across the thylakoid membranes. Together with PxcL, contributes to transient H(+) uptake following dark to light transition. The polypeptide is Proton extrusion protein PxcA (Synechococcus sp. (strain JA-2-3B'a(2-13)) (Cyanobacteria bacterium Yellowstone B-Prime)).